A 131-amino-acid polypeptide reads, in one-letter code: Histone H2B.1 (131 aa).

Basic and acidic residues predominate over residues 1–20 (MAPPKAEKKPASKAPAEKKP). The tract at residues 1-39 (MAPPKAEKKPASKAPAEKKPAAKKTASATDSKKRTKTRK) is disordered. 2 positions are modified to N6-acetyllysine; alternate: Lys8 and Lys9. Residues Lys8 and Lys9 each participate in a glycyl lysine isopeptide (Lys-Gly) (interchain with G-Cter in SUMO); alternate cross-link. Phosphoserine is present on Ser12. Lys13 bears the N6-acetyllysine mark. An N6-acetyllysine; alternate modification is found at Lys18. Lys18 is covalently cross-linked (Glycyl lysine isopeptide (Lys-Gly) (interchain with G-Cter in SUMO); alternate). A Glycyl lysine isopeptide (Lys-Gly) (interchain with G-Cter in SUMO) cross-link involves residue Lys19. A Glycyl lysine isopeptide (Lys-Gly) (interchain with G-Cter in ubiquitin) cross-link involves residue Lys125.

The protein belongs to the histone H2B family. The nucleosome is a histone octamer containing two molecules each of H2A, H2B, H3 and H4 assembled in one H3-H4 heterotetramer and two H2A-H2B heterodimers. The octamer wraps approximately 147 bp of DNA. In terms of processing, monoubiquitinated to form H2BK123ub1. H2BK123ub1 gives a specific tag for epigenetic transcriptional activation and is also prerequisite for H3K4me and H3K79me formation. H2BK123ub1 also modulates the formation of double-strand breaks during meiosis and is a prerequisite for DNA-damage checkpoint activation. Phosphorylated by STE20 to form H2BS10ph during progression through meiotic prophase. May be correlated with chromosome condensation. Post-translationally, acetylated by GCN5 to form H2BK11ac and H2BK16ac. H2BK16ac can also be formed by ESA1. Acetylation of N-terminal lysines and particularly formation of H2BK11acK16ac has a positive effect on transcription. In terms of processing, sumoylation to form H2BK6su or H2BK7su, and probably also H2BK16su or H2BK17su, occurs preferentially near the telomeres and represses gene transcription.

It localises to the nucleus. The protein resides in the chromosome. Its function is as follows. Core component of nucleosome. Nucleosomes wrap and compact DNA into chromatin, limiting DNA accessibility to the cellular machineries which require DNA as a template. Histones thereby play a central role in transcription regulation, DNA repair, DNA replication and chromosomal stability. DNA accessibility is regulated via a complex set of post-translational modifications of histones, also called histone code, and nucleosome remodeling. This Scheffersomyces stipitis (strain ATCC 58785 / CBS 6054 / NBRC 10063 / NRRL Y-11545) (Yeast) protein is Histone H2B.1 (HTB1).